The chain runs to 169 residues: dCTP pyrophosphatase 1 (169 aa).

The tract at residues Met-1–Ser-26 is disordered. Positions Glu-14–Ser-26 are enriched in polar residues. Substrate contacts are provided by residues His-37 and Trp-46–His-50. Residues Glu-62 and Glu-65 each contribute to the Mg(2+) site. Trp-72 provides a ligand contact to substrate. Ser-84 carries the post-translational modification Phosphoserine. Mg(2+) contacts are provided by Glu-94 and Asp-97. Residue Tyr-101 participates in substrate binding. The disordered stretch occupies residues Leu-143–Thr-169.

In terms of assembly, homotetramer. It depends on Mg(2+) as a cofactor.

It is found in the cytoplasm. Its subcellular location is the cytosol. It carries out the reaction dCTP + H2O = dCMP + diphosphate + H(+). Its function is as follows. Hydrolyzes deoxynucleoside triphosphates (dNTPs) to the corresponding nucleoside monophosphates. Has a strong preference for dCTP and its analogs including 5-iodo-dCTP and 5-methyl-dCTP for which it may even have a higher efficiency. May protect DNA or RNA against the incorporation of these genotoxic nucleotide analogs through their catabolism. This chain is dCTP pyrophosphatase 1, found in Bos taurus (Bovine).